A 231-amino-acid polypeptide reads, in one-letter code: Ribonuclease 3 (231 aa).

Residues 1–134 (MKTLEKKLAE…FLGALLLDAG (134 aa)) enclose the RNase III domain. E47 serves as a coordination point for Mg(2+). Residue D51 is part of the active site. 2 residues coordinate Mg(2+): D120 and E123. The active site involves E123. One can recognise a DRBM domain in the interval 160-229 (DYKTALQELL…AKNALEKLQR (70 aa)).

This sequence belongs to the ribonuclease III family. As to quaternary structure, homodimer. It depends on Mg(2+) as a cofactor.

The protein localises to the cytoplasm. It carries out the reaction Endonucleolytic cleavage to 5'-phosphomonoester.. Digests double-stranded RNA. Involved in the processing of primary rRNA transcript to yield the immediate precursors to the large and small rRNAs (23S and 16S). Also processes some mRNAs, and tRNAs when they are encoded in the rRNA operon. Its function is as follows. CRISPR (clustered regularly interspaced short palindromic repeat) is an adaptive immune system that provides protection against mobile genetic elements (viruses, transposable elements and conjugative plasmids). CRISPR clusters contain spacers, sequences complementary to antecedent mobile elements, and target invading nucleic acids. CRISPR clusters are transcribed and processed into CRISPR RNA (crRNA). In this organism endogenous ribonuclease 3 and Cas9 are required for correct coprocessing of pre-crRNA and the trans-encoded small RNA (tracrRNA). Cas9, crRNA and tracrRNA are required for cleavage of invading DNA. Complements pre-crRNA and tracrRNA coprocessing defects in an rnc deletion in S.pyogenes strain 370. The chain is Ribonuclease 3 from Streptococcus mutans serotype c (strain ATCC 700610 / UA159).